The primary structure comprises 408 residues: Arginine deiminase (408 aa).

Residue Cys-397 is the Amidino-cysteine intermediate of the active site.

The protein belongs to the arginine deiminase family.

It localises to the cytoplasm. The enzyme catalyses L-arginine + H2O = L-citrulline + NH4(+). It participates in amino-acid degradation; L-arginine degradation via ADI pathway; carbamoyl phosphate from L-arginine: step 1/2. This Listeria innocua serovar 6a (strain ATCC BAA-680 / CLIP 11262) protein is Arginine deiminase.